The sequence spans 269 residues: Ribonuclease HII (269 aa).

The region spanning 79 to 269 (TYLAGADEVG…SFLKNILNTF (191 aa)) is the RNase H type-2 domain. Asp-85, Glu-86, and Asp-182 together coordinate a divalent metal cation.

It belongs to the RNase HII family. Mn(2+) is required as a cofactor. The cofactor is Mg(2+).

It localises to the cytoplasm. It carries out the reaction Endonucleolytic cleavage to 5'-phosphomonoester.. Endonuclease that specifically degrades the RNA of RNA-DNA hybrids. This Clostridium novyi (strain NT) protein is Ribonuclease HII.